The primary structure comprises 786 residues: Wall-associated receptor kinase-like 17 (786 aa).

The signal sequence occupies residues M1–S30. Residues S31 to A369 are Extracellular-facing. N-linked (GlcNAc...) asparagine glycosylation is found at N69, N122, N160, N165, and N274. The atypical EGF-like stretch occupies residues C301–C362. 3 cysteine pairs are disulfide-bonded: C303-C318, C340-C353, and C347-C362. Residues I370–L390 form a helical membrane-spanning segment. Residues R391–W786 are Cytoplasmic-facing. A Phosphothreonine modification is found at T433. The 276-residue stretch at F444–I719 folds into the Protein kinase domain. Residues L450–V458 and K472 each bind ATP. Position 517 is a phosphotyrosine (Y517). Residue D570 is the Proton acceptor of the active site. Phosphothreonine occurs at positions 604 and 609. Y617 bears the Phosphotyrosine mark. Positions S766 to S775 are enriched in low complexity. The disordered stretch occupies residues S766–W786.

It belongs to the protein kinase superfamily. Ser/Thr protein kinase family.

Its subcellular location is the membrane. It catalyses the reaction L-seryl-[protein] + ATP = O-phospho-L-seryl-[protein] + ADP + H(+). It carries out the reaction L-threonyl-[protein] + ATP = O-phospho-L-threonyl-[protein] + ADP + H(+). In terms of biological role, serine/threonine-protein kinase that may function as a signaling receptor of extracellular matrix component. This is Wall-associated receptor kinase-like 17 (WAKL17) from Arabidopsis thaliana (Mouse-ear cress).